Here is a 64-residue protein sequence, read N- to C-terminus: Translational regulator CsrA (64 aa).

The protein belongs to the CsrA/RsmA family. Homodimer; the beta-strands of each monomer intercalate to form a hydrophobic core, while the alpha-helices form wings that extend away from the core.

It is found in the cytoplasm. Its function is as follows. A key translational regulator that binds mRNA to regulate translation initiation and/or mRNA stability. Mediates global changes in gene expression, shifting from rapid growth to stress survival by linking envelope stress, the stringent response and the catabolite repression systems. Usually binds in the 5'-UTR; binding at or near the Shine-Dalgarno sequence prevents ribosome-binding, repressing translation, binding elsewhere in the 5'-UTR can activate translation and/or stabilize the mRNA. Its function is antagonized by small RNA(s). The sequence is that of Translational regulator CsrA from Actinobacillus pleuropneumoniae serotype 5b (strain L20).